Here is a 510-residue protein sequence, read N- to C-terminus: Protein phosphatase 1H (510 aa).

Positions 73–503 constitute a PPM-type phosphatase domain; the sequence is STGYAEVINA…DDISVYVIPL (431 aa). Disordered stretches follow at residues 105–128 and 188–225; these read VQST…EGLQ and LGEE…PTRF.

The protein belongs to the PP2C family.

It localises to the nucleus. The protein localises to the cytoplasm. The enzyme catalyses O-phospho-L-seryl-[protein] + H2O = L-seryl-[protein] + phosphate. It carries out the reaction O-phospho-L-threonyl-[protein] + H2O = L-threonyl-[protein] + phosphate. The sequence is that of Protein phosphatase 1H (ppm1h) from Xenopus tropicalis (Western clawed frog).